The following is a 224-amino-acid chain: Biosynthetic peptidoglycan transglycosylase (224 aa).

A helical membrane pass occupies residues 9–29; sequence VLILVSFVLLIQLWIFCSLAW.

Belongs to the glycosyltransferase 51 family.

Its subcellular location is the cell inner membrane. It catalyses the reaction [GlcNAc-(1-&gt;4)-Mur2Ac(oyl-L-Ala-gamma-D-Glu-L-Lys-D-Ala-D-Ala)](n)-di-trans,octa-cis-undecaprenyl diphosphate + beta-D-GlcNAc-(1-&gt;4)-Mur2Ac(oyl-L-Ala-gamma-D-Glu-L-Lys-D-Ala-D-Ala)-di-trans,octa-cis-undecaprenyl diphosphate = [GlcNAc-(1-&gt;4)-Mur2Ac(oyl-L-Ala-gamma-D-Glu-L-Lys-D-Ala-D-Ala)](n+1)-di-trans,octa-cis-undecaprenyl diphosphate + di-trans,octa-cis-undecaprenyl diphosphate + H(+). It participates in cell wall biogenesis; peptidoglycan biosynthesis. Functionally, peptidoglycan polymerase that catalyzes glycan chain elongation from lipid-linked precursors. This chain is Biosynthetic peptidoglycan transglycosylase, found in Acinetobacter baylyi (strain ATCC 33305 / BD413 / ADP1).